Reading from the N-terminus, the 153-residue chain is uncharacterized protein (153 aa).

The tract at residues 1–88 (MDKDRPGLPA…VPPPQLDHPG (88 aa)) is disordered.

This is an uncharacterized protein from Epstein-Barr virus (strain P3HR-1) (HHV-4).